Reading from the N-terminus, the 83-residue chain is Small ribosomal subunit protein bS16 (83 aa).

The protein belongs to the bacterial ribosomal protein bS16 family.

The sequence is that of Small ribosomal subunit protein bS16 from Pseudomonas aeruginosa (strain LESB58).